The following is a 263-amino-acid chain: MTAARAGALGSVLCVLTGASRGFGRTLAHELCPRVLPGSTLLLVSRTEEALKGLAEELGHEFPGVRVRWAAADLSTTEGVSATVRAARELQAGTAHRLLIINNAGSIGDVSKMFVDFSAPEEVTEYMKFNVSSPLCLTASLLKTFPRRPDLQRLVVNVSSLAALQPYKSWVLYCSGKAARDMMFRVLAEEEDDVRVLSYAPGPLDTDMHEVACTQTADPELRRAIMDRKEKGNMVDIRVSANKMLDLLEADAYKSGDHIDFYD.

Residues Gly18 to Gly24, Arg46 to Thr47, and Asp73 to Leu74 contribute to the NADP(+) site. Substrate-binding positions include Ser160–Leu161 and Tyr173. Lys177 is an NADP(+) binding site. A substrate-binding site is contributed by Gly202. Leu204–His209 provides a ligand contact to NADP(+). Residue Asp260 participates in substrate binding.

Belongs to the sepiapterin reductase family. Homodimer.

It is found in the cytoplasm. The enzyme catalyses L-erythro-7,8-dihydrobiopterin + NADP(+) = L-sepiapterin + NADPH + H(+). It catalyses the reaction (6R)-L-erythro-5,6,7,8-tetrahydrobiopterin + 2 NADP(+) = 6-pyruvoyl-5,6,7,8-tetrahydropterin + 2 NADPH + 2 H(+). Its function is as follows. Catalyzes the final one or two reductions in tetra-hydrobiopterin biosynthesis to form 5,6,7,8-tetrahydrobiopterin. The sequence is that of Sepiapterin reductase (spr) from Xenopus laevis (African clawed frog).